A 546-amino-acid chain; its full sequence is Membrane protein insertase YidC (546 aa).

The helical transmembrane segment at 8 to 28 threads the bilayer; the sequence is ILLATVLSVGILILWQVIFPT. The disordered stretch occupies residues 31-70; that stretch reads APPKPAHPPAAEVAKPAAPASPAPGAAAPAVPAPPPDAPE. A compositionally biased stretch (low complexity) spans 39 to 60; it reads PAAEVAKPAAPASPAPGAAAPA. The next 5 membrane-spanning stretches (helical) occupy residues 326–346, 356–376, 422–442, 459–479, and 498–518; these read IDYG…LYVM, WGVA…PLTY, LGGC…YAAL, LTAH…SFVM, and FFPG…TLYI.

Belongs to the OXA1/ALB3/YidC family. Type 1 subfamily. In terms of assembly, interacts with the Sec translocase complex via SecD. Specifically interacts with transmembrane segments of nascent integral membrane proteins during membrane integration.

The protein localises to the cell inner membrane. Functionally, required for the insertion and/or proper folding and/or complex formation of integral membrane proteins into the membrane. Involved in integration of membrane proteins that insert both dependently and independently of the Sec translocase complex, as well as at least some lipoproteins. Aids folding of multispanning membrane proteins. The polypeptide is Membrane protein insertase YidC (Anaeromyxobacter dehalogenans (strain 2CP-1 / ATCC BAA-258)).